The sequence spans 798 residues: MVIMSEDASVPAPSAAQPRPLRVGFYDIERTLGKGNFAVVKLARHRVTKTQVAIKIIDKTRLDPSNLEKIYREVQIMKLLNHPHIIKLYQVMETKDMLYIVTEFAKNGEMFDHLTSNGHLSESEARKKFWQILSAVEYCHSHHIVHRDLKTENLLLDANMNIKLADFGFGNFYKSGEPLSTWCGSPPYAAPEVFEGKEYEGPHLDIWSLGVVLYVLVCGSLPFDGPNLPTLRQRVLEGRFRIPYFMSEDCETLIRRMLVVDPTKRITISQIKQHKWMQADPSLRQQQSLSFSMQNYNSNLGDYNEQVLGIMQTLGIDRQRTVESLQNSSYNHFAAIYYLLLERLKEYRSSQLSSRPATGRQQRPRSSEISNAEMPQDSLTSETLRSSLLYQQPQSLIQPSLQAEMDCDMNNPLQPVFFPVDPNFNGLFRNRSISPSSLLETTISEEVRQEKELEDEIKAYDHPIRIPSNTSRRHTLAEVTTHFYQHAPPCIVISSSASPTEGTSSDSCLTSSSNDSSVALSSCLAGQVMTGSPATARMTSAFLASQSDAPVLQVQGCMGGASLLPVSFQEGRRASDTSLTQGLKAFRQQLRKNARAKGFLGLNKIKGFARQVCQSSSSRAARSAMSPFQHAQPNTCIYSSSGSSREGRNLLEEVLQQQRMLQLQHHQLLQPACPQTSQTSATNGLPPSDSAGTCKASNSLLLSELQRENSFELAFGGNSQLLQPHFFGVSVSPVSSAAHLLDTHLYISSNVSPVGTTFSQQQSFSAQSPSYDAVTLQHGDCEMEDLTSNQLGKFVLVK.

The region spanning 26–277 (YDIERTLGKG…ISQIKQHKWM (252 aa)) is the Protein kinase domain. Residues 32–40 (LGKGNFAVV) and Lys55 each bind ATP. Asp148 functions as the Proton acceptor in the catalytic mechanism. Thr181 bears the Phosphothreonine mark. Ser185 is subject to Phosphoserine. The region spanning 302-342 (DYNEQVLGIMQTLGIDRQRTVESLQNSSYNHFAAIYYLLLE) is the UBA domain. Residues 351–361 (QLSSRPATGRQ) are compositionally biased toward polar residues. The interval 351 to 382 (QLSSRPATGRQQRPRSSEISNAEMPQDSLTSE) is disordered. Ser575 carries the post-translational modification Phosphoserine. The segment at 672–691 (ACPQTSQTSATNGLPPSDSA) is disordered. Over residues 673-685 (CPQTSQTSATNGL) the composition is skewed to polar residues.

The protein belongs to the protein kinase superfamily. CAMK Ser/Thr protein kinase family. SNF1 subfamily. The cofactor is Mg(2+). Post-translationally, phosphorylated at Thr-181 by STK11/LKB1 in complex with STE20-related adapter-alpha (STRADA) pseudo kinase and CAB39. In terms of tissue distribution, ubiquitously expressed in embryonic tissue.

Its subcellular location is the cytoplasm. The catalysed reaction is L-seryl-[protein] + ATP = O-phospho-L-seryl-[protein] + ADP + H(+). It catalyses the reaction L-threonyl-[protein] + ATP = O-phospho-L-threonyl-[protein] + ADP + H(+). Its activity is regulated as follows. Activated by phosphorylation on Thr-181. Phosphorylates IRS1 in insulin-stimulated adipocytes, potentially modulating the efficiency of insulin signal transduction. Inhibits CREB activity by phosphorylating and repressing the CREB-specific coactivators, CRTC1-3. In Gallus gallus (Chicken), this protein is Serine/threonine-protein kinase SIK2 (SIK2).